Consider the following 308-residue polypeptide: Apolipoprotein E (308 aa).

Residues 1–18 (MKFLWAALVVTLLAGCRA) form the signal peptide. Repeat copies occupy residues 75–96 (LLIEETMKEVKAYKEELEKQVG), 97–118 (PIAQETQARLSKELQAAQARLE), 119–140 (SDMEDVRTRLAQYRSEAQAALG), 141–162 (QNTDDLQGRLASHLRKLRKRLL), 163–184 (RDAEDLQKRLAVYQAGTREAAE), 185–206 (RGVSAVHERLGPLMMEGPLQAI), 207–224 (PPSQQLRERAEAWGQKVR), and 225–246 (GRLESVGSQARDRLDDMRDQME). The segment at 75 to 246 (LLIEETMKEV…RLDDMRDQME (172 aa)) is 8 X 22 AA approximate tandem repeats. The interval 153–163 (HLRKLRKRLLR) is LDL and other lipoprotein receptors binding. Residue 157–160 (LRKR) participates in heparin binding. The interval 205–281 (AIPPSQQLRE…SWFEPLVQDM (77 aa)) is lipid-binding and lipoprotein association. 220-227 (GQKVRGRL) provides a ligand contact to heparin. A homooligomerization region spans residues 257–308 (SQVRLQAEAFQTRLKSWFEPLVQDMQRQWASLVEKVQSTLGISPSTKPSKTK). The tract at residues 269–281 (RLKSWFEPLVQDM) is specificity for association with VLDL.

This sequence belongs to the apolipoprotein A1/A4/E family. In terms of assembly, homotetramer. May interact with ABCA1; functionally associated with ABCA1 in the biogenesis of HDLs. May interact with APP/A4 amyloid-beta peptide; the interaction is extremely stable in vitro but its physiological significance is unclear. May interact with MAPT. May interact with MAP2. In the cerebrospinal fluid, interacts with secreted SORL1. Interacts with PMEL; this allows the loading of PMEL luminal fragment on ILVs to induce fibril nucleation. APOE exists as multiple glycosylated and sialylated glycoforms within cells and in plasma. The extent of glycosylation and sialylation are tissue and context specific. In terms of processing, glycated in plasma VLDL. Post-translationally, phosphorylated by FAM20C in the extracellular medium.

The protein localises to the secreted. It localises to the extracellular space. The protein resides in the extracellular matrix. Its subcellular location is the extracellular vesicle. It is found in the endosome. The protein localises to the multivesicular body. APOE is an apolipoprotein, a protein associating with lipid particles, that mainly functions in lipoprotein-mediated lipid transport between organs via the plasma and interstitial fluids. APOE is a core component of plasma lipoproteins and is involved in their production, conversion and clearance. Apolipoproteins are amphipathic molecules that interact both with lipids of the lipoprotein particle core and the aqueous environment of the plasma. As such, APOE associates with chylomicrons, chylomicron remnants, very low density lipoproteins (VLDL) and intermediate density lipoproteins (IDL) but shows a preferential binding to high-density lipoproteins (HDL). It also binds a wide range of cellular receptors including the LDL receptor/LDLR and the very low-density lipoprotein receptor/VLDLR that mediate the cellular uptake of the APOE-containing lipoprotein particles. Finally, APOE also has a heparin-binding activity and binds heparan-sulfate proteoglycans on the surface of cells, a property that supports the capture and the receptor-mediated uptake of APOE-containing lipoproteins by cells. This Pteropus vampyrus (Large flying fox) protein is Apolipoprotein E (APOE).